The chain runs to 435 residues: ATP-dependent protease ATPase subunit HslU (435 aa).

ATP is bound by residues V18, G60 to E65, D248, E313, and R385.

It belongs to the ClpX chaperone family. HslU subfamily. In terms of assembly, a double ring-shaped homohexamer of HslV is capped on each side by a ring-shaped HslU homohexamer. The assembly of the HslU/HslV complex is dependent on binding of ATP.

It localises to the cytoplasm. Functionally, ATPase subunit of a proteasome-like degradation complex; this subunit has chaperone activity. The binding of ATP and its subsequent hydrolysis by HslU are essential for unfolding of protein substrates subsequently hydrolyzed by HslV. HslU recognizes the N-terminal part of its protein substrates and unfolds these before they are guided to HslV for hydrolysis. This chain is ATP-dependent protease ATPase subunit HslU, found in Azorhizobium caulinodans (strain ATCC 43989 / DSM 5975 / JCM 20966 / LMG 6465 / NBRC 14845 / NCIMB 13405 / ORS 571).